The chain runs to 521 residues: Hyccin (521 aa).

T306 is modified (phosphothreonine). S321 bears the Phosphoserine mark. The segment covering 355 to 373 (AASSTSQSGLSNSSHNCSN) has biased composition (low complexity). A disordered region spans residues 355–413 (AASSTSQSGLSNSSHNCSNKTSVGKNQRRSGGSKAGAKERETAGESCRDHFARKQTQRA). The segment covering 390-406 (GAKERETAGESCRDHFA) has biased composition (basic and acidic residues). A phosphoserine mark is found at S415, S422, S433, S453, and S465.

This sequence belongs to the Hyccin family. As to quaternary structure, component of a phosphatidylinositol 4-kinase (PI4K) complex, composed of PI4KA, EFR3 (EFR3A or EFR3B), TTC7 (TTC7A or TTC7B) and HYCC (HYCC1 or HYCC2). Interacts with TTC7 (TTC7A or TTC7B), interaction is direct. Predominantly expressed in the central nervous system, where it is found in neurons but not in myelinating cells. Lower abundance is observed in peripheral neurons, where it is detectable only at early postnatal ages. Expressed in both oligodendrocytes and neurons.

It localises to the cytoplasm. The protein localises to the cytosol. The protein resides in the cell membrane. Its function is as follows. Component of a complex required to localize phosphatidylinositol 4-kinase (PI4K) to the plasma membrane. The complex acts as a regulator of phosphatidylinositol 4-phosphate (PtdIns(4)P) synthesis. HYCC1 plays a key role in oligodendrocytes formation, a cell type with expanded plasma membrane that requires generation of PtdIns(4)P. Its role in oligodendrocytes formation probably explains its importance in myelination of the central and peripheral nervous system. May also have a role in the beta-catenin/Lef signaling pathway. The protein is Hyccin (Hycc1) of Mus musculus (Mouse).